An 819-amino-acid polypeptide reads, in one-letter code: Lon protease (819 aa).

The tract at residues 1 to 36 (MDSTTNSDSPILDPNPEDVEKLLDESEEESEDQSTE) is disordered. The Lon N-terminal domain maps to 43 to 240 (LFILPLNKRP…KALILLKKEL (198 aa)). 393–400 (GPPGVGKT) contributes to the ATP binding site. The region spanning 635–817 (STPVGVATGL…DDVLKVAFPK (183 aa)) is the Lon proteolytic domain. Catalysis depends on residues S723 and K766.

The protein belongs to the peptidase S16 family. As to quaternary structure, homohexamer. Organized in a ring with a central cavity.

The protein resides in the cytoplasm. The enzyme catalyses Hydrolysis of proteins in presence of ATP.. Its function is as follows. ATP-dependent serine protease that mediates the selective degradation of mutant and abnormal proteins as well as certain short-lived regulatory proteins. Required for cellular homeostasis and for survival from DNA damage and developmental changes induced by stress. Degrades polypeptides processively to yield small peptide fragments that are 5 to 10 amino acids long. Binds to DNA in a double-stranded, site-specific manner. This is Lon protease from Chlamydia pneumoniae (Chlamydophila pneumoniae).